Reading from the N-terminus, the 289-residue chain is 3-methyl-2-oxobutanoate hydroxymethyltransferase (289 aa).

Mg(2+) contacts are provided by aspartate 58 and aspartate 99. Residues aspartate 58–serine 59, aspartate 99, and lysine 128 contribute to the 3-methyl-2-oxobutanoate site. Glutamate 130 contacts Mg(2+). The active-site Proton acceptor is the glutamate 197.

Belongs to the PanB family. Homodecamer; pentamer of dimers. Mg(2+) is required as a cofactor.

Its subcellular location is the cytoplasm. It carries out the reaction 3-methyl-2-oxobutanoate + (6R)-5,10-methylene-5,6,7,8-tetrahydrofolate + H2O = 2-dehydropantoate + (6S)-5,6,7,8-tetrahydrofolate. Its pathway is cofactor biosynthesis; (R)-pantothenate biosynthesis; (R)-pantoate from 3-methyl-2-oxobutanoate: step 1/2. Functionally, catalyzes the reversible reaction in which hydroxymethyl group from 5,10-methylenetetrahydrofolate is transferred onto alpha-ketoisovalerate to form ketopantoate. This chain is 3-methyl-2-oxobutanoate hydroxymethyltransferase, found in Leptothrix cholodnii (strain ATCC 51168 / LMG 8142 / SP-6) (Leptothrix discophora (strain SP-6)).